We begin with the raw amino-acid sequence, 467 residues long: UDP-N-acetylmuramate--L-alanine ligase (467 aa).

112–118 provides a ligand contact to ATP; it reads GTHGKTT.

Belongs to the MurCDEF family.

Its subcellular location is the cytoplasm. It catalyses the reaction UDP-N-acetyl-alpha-D-muramate + L-alanine + ATP = UDP-N-acetyl-alpha-D-muramoyl-L-alanine + ADP + phosphate + H(+). Its pathway is cell wall biogenesis; peptidoglycan biosynthesis. Functionally, cell wall formation. The chain is UDP-N-acetylmuramate--L-alanine ligase from Paraburkholderia xenovorans (strain LB400).